The chain runs to 398 residues: Cyclin-dependent kinase D-1 (398 aa).

A Protein kinase domain is found at 11–291 (YLKREVLGQG…IQQALKHRYF (281 aa)). ATP is bound by residues 17 to 25 (LGQGTYGVV) and Lys40. Tyr22 carries the post-translational modification Phosphotyrosine. The active-site Proton acceptor is Asp133. Residue Ser160 is modified to Phosphoserine. Thr166 carries the post-translational modification Phosphothreonine. The disordered stretch occupies residues 296–318 (SPTDPLKLPRPVSKQDAKSSDSK). A compositionally biased stretch (basic and acidic residues) spans 308–318 (SKQDAKSSDSK).

The protein belongs to the protein kinase superfamily. CMGC Ser/Thr protein kinase family. CDC2/CDKX subfamily. In terms of processing, autophosphorylated. Expressed at low levels in suspension cell culture, but not in plant organs.

The protein resides in the nucleus. The catalysed reaction is L-seryl-[protein] + ATP = O-phospho-L-seryl-[protein] + ADP + H(+). It catalyses the reaction L-threonyl-[protein] + ATP = O-phospho-L-threonyl-[protein] + ADP + H(+). It carries out the reaction [DNA-directed RNA polymerase] + ATP = phospho-[DNA-directed RNA polymerase] + ADP + H(+). The protein is Cyclin-dependent kinase D-1 (CDKD-1) of Arabidopsis thaliana (Mouse-ear cress).